Consider the following 158-residue polypeptide: Putative 8-oxo-dGTP diphosphatase YtkD (158 aa).

Residues Asp6–Pro145 form the Nudix hydrolase domain. Residues Gly53–Gly74 carry the Nudix box motif. Residues Glu68 and Glu72 each contribute to the Mg(2+) site.

This sequence belongs to the Nudix hydrolase family. The cofactor is Mg(2+).

It catalyses the reaction 8-oxo-dGTP + H2O = 8-oxo-dGMP + diphosphate + H(+). Its activity is regulated as follows. Not induced by oxidative damage (following treatment with paraquat or hydrogen peroxide). Not induced by mitomycin C. Not induced by sigma-B general stress inducers such as sodium chloride, ethanol or heat. Involved in the GO system responsible for removing an oxidatively damaged form of guanine (7,8-dihydro-8-oxoguanine, 8-oxo-dGTP) from DNA and the nucleotide pool. 8-oxo-dGTP is inserted opposite dA and dC residues of template DNA with almost equal efficiency thus leading to A.T to G.C transversions. Functions, in conjunction with MutT, to protect vegetatively growing cells from DNA-damaging agents such as H(2)O(2) or t-BHP (t-butylhydroperoxide). The 2 proteins do not however protect spores. According to PubMed:15576788, phosphohydrolase that catalyzes the hydrolysis of all common nucleoside triphosphates as well as of the mutagenic analog 8-oxo-dGTP. The high catalytic efficiency on dGTP is in contrast to results from PubMed:14761999. According to PubMed:14761999, catalyzes the hydrolysis of 8-oxo-dGTP with a specific activity 413 times higher than that exhibited against dGTP. Preferentially catalyzes the hydrolysis of 8-oxo-dGTP and 8-oxo-GTP. According to PubMed:15576788, hydrolyzes nucleoside triphosphates in a stepwise fashion through the diphosphate to the monophosphate, releasing two molecules of inorganic orthophosphate. The sequence is that of Putative 8-oxo-dGTP diphosphatase YtkD (ytkD) from Bacillus subtilis (strain 168).